A 156-amino-acid chain; its full sequence is Small ribosomal subunit protein uS7 (156 aa).

It belongs to the universal ribosomal protein uS7 family. In terms of assembly, part of the 30S ribosomal subunit. Contacts proteins S9 and S11.

One of the primary rRNA binding proteins, it binds directly to 16S rRNA where it nucleates assembly of the head domain of the 30S subunit. Is located at the subunit interface close to the decoding center, probably blocks exit of the E-site tRNA. The chain is Small ribosomal subunit protein uS7 from Desulforudis audaxviator (strain MP104C).